The sequence spans 392 residues: Pyruvate synthase subunit PorA (392 aa).

Heterotetramer of one alpha, one beta, one delta and one gamma chain.

The enzyme catalyses 2 oxidized [2Fe-2S]-[ferredoxin] + pyruvate + CoA = 2 reduced [2Fe-2S]-[ferredoxin] + acetyl-CoA + CO2 + H(+). The sequence is that of Pyruvate synthase subunit PorA (porA) from Thermotoga maritima (strain ATCC 43589 / DSM 3109 / JCM 10099 / NBRC 100826 / MSB8).